A 134-amino-acid polypeptide reads, in one-letter code: Terepressin/terephysin (134 aa).

The first 33 residues, Met-1–Gly-33, serve as a signal peptide directing secretion. A disulfide bridge links Cys-34 with Cys-39. Positions Lys-44–Val-50 are excised as a propeptide. Intrachain disulfides connect Cys-56-Cys-100, Cys-59-Cys-73, Cys-67-Cys-90, Cys-74-Cys-80, Cys-107-Cys-121, Cys-115-Cys-133, and Cys-122-Cys-127.

Belongs to the vasopressin/oxytocin family. In terms of processing, contains 7 disulfide bonds. As to expression, expressed by the venom duct.

Its subcellular location is the secreted. In Terebra anilis (Auger snail), this protein is Terepressin/terephysin.